A 215-amino-acid polypeptide reads, in one-letter code: Probable cutinase 3 (215 aa).

The first 17 residues, 1-17 (MHFRALLVSALATLAMA), serve as a signal peptide directing secretion. 2 disulfide bridges follow: Cys-39–Cys-118 and Cys-65–Cys-79. Ser-129 acts as the Nucleophile in catalysis. A disulfide bridge connects residues Cys-180 and Cys-187. Asp-184 is an active-site residue. The active-site Proton donor/acceptor is His-197.

Belongs to the cutinase family.

The protein localises to the secreted. The catalysed reaction is cutin + H2O = cutin monomers.. Catalyzes the hydrolysis of complex carboxylic polyesters found in the cell wall of plants. Degrades cutin, a macromolecule that forms the structure of the plant cuticle. This Aspergillus clavatus (strain ATCC 1007 / CBS 513.65 / DSM 816 / NCTC 3887 / NRRL 1 / QM 1276 / 107) protein is Probable cutinase 3.